The primary structure comprises 249 residues: Type III pantothenate kinase (249 aa).

ATP is bound at residue 6–13 (DCGNSFIK). Substrate contacts are provided by residues tyrosine 93 and 100–103 (GMDR). The active-site Proton acceptor is the aspartate 102. Aspartate 122 provides a ligand contact to K(+). Threonine 125 provides a ligand contact to ATP. Substrate is bound at residue threonine 181.

The protein belongs to the type III pantothenate kinase family. Homodimer. The cofactor is NH4(+). It depends on K(+) as a cofactor.

Its subcellular location is the cytoplasm. It carries out the reaction (R)-pantothenate + ATP = (R)-4'-phosphopantothenate + ADP + H(+). Its pathway is cofactor biosynthesis; coenzyme A biosynthesis; CoA from (R)-pantothenate: step 1/5. Functionally, catalyzes the phosphorylation of pantothenate (Pan), the first step in CoA biosynthesis. The sequence is that of Type III pantothenate kinase from Pseudomonas putida (strain ATCC 47054 / DSM 6125 / CFBP 8728 / NCIMB 11950 / KT2440).